We begin with the raw amino-acid sequence, 590 residues long: MTSPLCFWCFCVWAAANWPPGSALQLQPGMPNVCREEQLTLVRLSRPCAQAFIDTIQFWKQGCSGPRWCVGYERRIRYYIIYRHVYATEHQTVFRCCPGWIQWDDEPGCFSSLSSLGTHFSGRECSYQDTRQCLCSQGFHGPHCQYEKNKHLESELTPGFLQKNVDECAVVNGGCQQRCINTLGTFHCECDTGYRRHADERTCIKTDPCAGANGCAHLCQTENGMARCACHAGYQLSEDKKACEDINECAGELAPCAHHCVNSKGSFTCTCHPGFELGADRKHCYRIELEIVNICEKNNGGCSHHCEPAIGGAHCSCNHGHQLDTDGKTCIDFDECESGEACCAQLCINYLGGYECSCEEGFQISSDGCGCDALDEQLEEEEEEIDILRFPGRLAQNPPQPFPYLDPSLTASYEDEDNDDADSEAEGEVQGLTALYRVVCLDGTFGLDCSLSCEDCMNGGRCQEGKSGCLCPAEWTGLICNESSVLRTGEDQQAPAGCLKGFFGKNCKRKCHCANNVHCHRVYGACMCDLGRYGRFCHLSCPRGAYGASCSLECQCVEENTLECSAKNGSCTCKSGYQGNRCQEELPLPA.

The N-terminal stretch at 1–23 (MTSPLCFWCFCVWAAANWPPGSA) is a signal peptide. Residues 44 to 104 (LSRPCAQAFI…RCCPGWIQWD (61 aa)) enclose the EMI domain. The EGF-like 1 domain maps to 105-145 (DEPGCFSSLSSLGTHFSGRECSYQDTRQCLCSQGFHGPHCQ). Disulfide bonds link C109–C125, C135–C144, C168–C179, C175–C188, C190–C203, C209–C219, C215–C228, C230–C243, C249–C260, C256–C269, and C271–C284. The region spanning 164–204 (NVDECAVVNGGCQQRCINTLGTFHCECDTGYRRHADERTCI) is the EGF-like 2; calcium-binding domain. The 40-residue stretch at 205–244 (KTDPCAGANGCAHLCQTENGMARCACHAGYQLSEDKKACE) folds into the EGF-like 3 domain. One can recognise an EGF-like 4; calcium-binding domain in the interval 245-285 (DINECAGELAPCAHHCVNSKGSFTCTCHPGFELGADRKHCY). The tract at residues 393 to 424 (RLAQNPPQPFPYLDPSLTASYEDEDNDDADSE) is disordered. Residues 413 to 424 (YEDEDNDDADSE) are compositionally biased toward acidic residues. Positions 445–481 (FGLDCSLSCEDCMNGGRCQEGKSGCLCPAEWTGLICN) constitute an EGF-like 5 domain. 3 cysteine pairs are disulfide-bonded: C449–C462, C456–C469, and C471–C480.

The protein is EGF-like and EMI domain-containing protein 1 (Egfem1) of Mus musculus (Mouse).